A 1490-amino-acid polypeptide reads, in one-letter code: Leucine-rich repeat-containing protein 7 (1490 aa).

LRR repeat units follow at residues 23-44 (IISV…VFNF), 47-68 (TLEE…LFNC), 70-91 (ALRK…IASL), 93-114 (NLKE…IKCC), 116-137 (CLTI…FTQL), 139-161 (NLTQ…GRLV), 162-183 (KLRI…MHKL), 185-206 (QLER…LDQI), 208-229 (NLRE…IGKL), 231-253 (MLVY…SGCE), 254-275 (ALED…IGLL), 277-298 (KLTT…IGNL), 300-321 (LLEE…IGYL), 323-344 (SLRT…IGSC), 346-367 (NVTV…IGQM), 369-391 (RLRV…TKLK), and 392-413 (ELAA…QTEA). Residues S439, S441, and S443 each carry the phosphoserine modification. Over residues 663 to 676 (KKESTDESEVDKTH) the composition is skewed to basic and acidic residues. 3 disordered regions span residues 663 to 709 (KKES…VGSL), 775 to 808 (DNTG…HGRR), and 822 to 899 (ELEQ…YHDP). A compositionally biased stretch (polar residues) spans 677–686 (CLNNSVSSGT). Over residues 687-700 (YSDYSPSQASSASS) the composition is skewed to low complexity. The segment covering 787-799 (ENANNNPLLSSKA) has biased composition (polar residues). The residue at position 831 (T831) is a Phosphothreonine. At S850 the chain carries Phosphoserine. Residues 859 to 871 (PSKLETTPTTSPL) are compositionally biased toward low complexity. T865 carries the post-translational modification Phosphothreonine. The residue at position 869 (S869) is a Phosphoserine. Positions 872 to 882 (PERKDHMKEPT) are enriched in basic and acidic residues. Phosphoserine is present on residues S947, S949, and S1118. Residue R1149 is modified to Omega-N-methylarginine. Residues 1194-1217 (LTQRRPLSARSYSTESYGASQTRP) are compositionally biased toward polar residues. The disordered stretch occupies residues 1194–1218 (LTQRRPLSARSYSTESYGASQTRPV). S1233 carries the phosphoserine modification. 2 disordered regions span residues 1238 to 1265 (GNYG…SCGK) and 1282 to 1312 (RLDR…PYPL). A compositionally biased stretch (basic and acidic residues) spans 1243–1263 (KTSDNSDIKTRPTPVKGEESC). The span at 1286–1307 (TPSQQSNILDNGQEDVSPSGQW) shows a compositional bias: polar residues. A phosphoserine mark is found at S1288 and S1392. The region spanning 1398–1488 (EQFCVRIEKN…TVDLVIQREL (91 aa)) is the PDZ domain.

The protein belongs to the LAP (LRR and PDZ) protein family. Interacts with CNKSR2 and DLG4. Interacts with CTNND2/Catenin delta-2. Forms a complex with N-cadherin through CTNND2. Interacts with CAMK2A. Post-translationally, O-glycosylated and phosphorylated. As to expression, brain-specific. Highly concentrated at synapses.

It localises to the cytoplasm. The protein localises to the postsynaptic density. Required for normal synaptic spine architecture and function. Necessary for DISC1 and GRM5 localization to postsynaptic density complexes and for both N-methyl D-aspartate receptor-dependent and metabotropic glutamate receptor-dependent long term depression. The protein is Leucine-rich repeat-containing protein 7 (Lrrc7) of Rattus norvegicus (Rat).